Reading from the N-terminus, the 218-residue chain is Ribose-5-phosphate isomerase A (218 aa).

Residues 28-31 (TGST), 81-84 (DGAD), and 94-97 (KGGG) contribute to the substrate site. E103 serves as the catalytic Proton acceptor. K121 serves as a coordination point for substrate.

This sequence belongs to the ribose 5-phosphate isomerase family. In terms of assembly, homodimer.

The catalysed reaction is aldehydo-D-ribose 5-phosphate = D-ribulose 5-phosphate. It functions in the pathway carbohydrate degradation; pentose phosphate pathway; D-ribose 5-phosphate from D-ribulose 5-phosphate (non-oxidative stage): step 1/1. Its function is as follows. Catalyzes the reversible conversion of ribose-5-phosphate to ribulose 5-phosphate. This is Ribose-5-phosphate isomerase A from Aliivibrio fischeri (strain ATCC 700601 / ES114) (Vibrio fischeri).